The following is a 702-amino-acid chain: MADS-box MEF2 type transcription factor MIG1 (702 aa).

The region spanning 1–61 is the MADS-box domain; sequence MGRRKIEIKA…KKLYEYSSGD (61 aa). Disordered stretches follow at residues 73-608 and 658-702; these read GGAT…NIDT and PSFL…KVDS. Over residues 86–96 the composition is skewed to acidic residues; it reads GGDDDDEEEGD. The span at 132 to 144 shows a compositional bias: pro residues; sequence ASPPIPNGVPFPP. Low complexity predominate over residues 145-155; that stretch reads HGHGVPRGHTP. A compositionally biased stretch (polar residues) spans 180–195; it reads GSPQVNGFGFGQQQSM. Residues 201-241 show a composition bias toward pro residues; sequence TTMPPHMPPQMAPGPPFPYPQHPQHPPHPPHPPHPPHPQQP. Low complexity-rich tracts occupy residues 273–284, 326–343, and 350–371; these read PMGMQRHSVSPP, ESPQQIEPPQHQHQQQPE, and EQQQQQQQSQQSQQPQEPQSEP. Residues 456 to 465 show a composition bias toward polar residues; that stretch reads VDESTSNASE. Low complexity-rich tracts occupy residues 487 to 512 and 530 to 553; these read RASISSVSSAPESAPAPPSRSNSLRA and DGSGSATAESASSAQGGASTDATS. The span at 554–567 shows a compositional bias: polar residues; it reads QSTRQNDSHSSTNM. Over residues 587–600 the composition is skewed to pro residues; the sequence is PPNPFAPKRPPQHP. Residues 693–702 are compositionally biased toward basic and acidic residues; that stretch reads NEPKRVKVDS.

The protein belongs to the MEF2 family. In terms of assembly, interacts with MAPK MPS1.

The protein resides in the nucleus. Functionally, transcription factor acting downstream of the MPS1 MAP kinase (MAPK) cascade during conidiation and plant infection. Required for overcoming plant defense responses and the differentiation of secondary infectious hyphae in live plant cells. The sequence is that of MADS-box MEF2 type transcription factor MIG1 from Pyricularia oryzae (strain 70-15 / ATCC MYA-4617 / FGSC 8958) (Rice blast fungus).